Here is a 1446-residue protein sequence, read N- to C-terminus: DNA polymerase III PolC-type (1446 aa).

Positions 425–581 (YVIFDVETTG…ADAESTGYLL (157 aa)) constitute an Exonuclease domain.

This sequence belongs to the DNA polymerase type-C family. PolC subfamily.

Its subcellular location is the cytoplasm. It carries out the reaction DNA(n) + a 2'-deoxyribonucleoside 5'-triphosphate = DNA(n+1) + diphosphate. Functionally, required for replicative DNA synthesis. This DNA polymerase also exhibits 3' to 5' exonuclease activity. This chain is DNA polymerase III PolC-type, found in Latilactobacillus sakei subsp. sakei (strain 23K) (Lactobacillus sakei subsp. sakei).